The sequence spans 445 residues: MSEMTLNAAEQPIDELVGWVKQHDFSLNLTTERLAFLIAIAVLSNERFDEELGEGELHDAFAIVTRLFDETGEASAFRANNAINEMVKQRLISRFVSEITDGASIYRLSPLAIGITDYYVRHREFSRLRLSIQLSMVADEMAKAIEAAQKGGTPGHWKKNVYGVLKYSVGEIFDQIDLNQRVMDEQQQSVKQQIADLLNKDWREAINNCEALLSETSSTLRELQDTLQAASDELQTQILDIQEIVYGDPELEFIEEALFGLQMKLDRITSWGQQAIDLWIGYDRHVHKFIRTAIDMDKNRAFSSRLRQSIKDYFDMPWYLTFADAERLSDLRDEALVLRDDEVTGQVPMEVEYEEFQQVNDELSERIGDMLKAHKEQGTPIDLSVVLRDYLAQHPYTHHFDLARIIVDQAVRLGYSESDYQAIQPDWKAINEFGAKVQANVIDRY.

Residues 213 to 241 (LSETSSTLRELQDTLQAASDELQTQILDI) form a leucine-zipper region.

It belongs to the MukF family. As to quaternary structure, interacts, and probably forms a ternary complex, with MukE and MukB via its C-terminal region. The complex formation is stimulated by calcium or magnesium. It is required for an interaction between MukE and MukB.

It is found in the cytoplasm. It localises to the nucleoid. In terms of biological role, involved in chromosome condensation, segregation and cell cycle progression. May participate in facilitating chromosome segregation by condensation DNA from both sides of a centrally located replisome during cell division. Not required for mini-F plasmid partitioning. Probably acts via its interaction with MukB and MukE. Overexpression results in anucleate cells. It has a calcium binding activity. The polypeptide is Chromosome partition protein MukF (Vibrio parahaemolyticus serotype O3:K6 (strain RIMD 2210633)).